Reading from the N-terminus, the 213-residue chain is Motile sperm domain-containing protein 1 (213 aa).

One can recognise an MSP domain in the interval 16-143; it reads PVFVFPTELI…KEHLTESVFF (128 aa). Helical transmembrane passes span 159–179 and 191–211; these read SLLT…PTLG and LSVN…MAIL. The Nuclear export signal signature appears at 205–208; the sequence is LITM.

In terms of tissue distribution, widely expressed. Shows highest expression in ribs, and slightly lower levels of expression in heart, kidney, muscle, thymus, calvariae and lung. Also detected at low levels in spleen and liver.

Its subcellular location is the endoplasmic reticulum membrane. It localises to the golgi apparatus membrane. In terms of biological role, plays a role in differentiation and/or proliferation of mesenchymal stem cells. Proposed to be involved in epithelial-to-mesenchymal transition (EMT). However, another study suggests that it is not required for EMT or stem cell self-renewal and acts during later stages of differentiation. The protein is Motile sperm domain-containing protein 1 (Mospd1) of Mus musculus (Mouse).